The following is a 320-amino-acid chain: tRNA U34 carboxymethyltransferase (320 aa).

Carboxy-S-adenosyl-L-methionine is bound by residues Lys89, Trp103, Lys108, Gly128, 150–152 (DPT), 179–180 (IE), Met194, Tyr198, and Arg313.

It belongs to the class I-like SAM-binding methyltransferase superfamily. CmoB family. As to quaternary structure, homotetramer.

It carries out the reaction carboxy-S-adenosyl-L-methionine + 5-hydroxyuridine(34) in tRNA = 5-carboxymethoxyuridine(34) in tRNA + S-adenosyl-L-homocysteine + H(+). Its function is as follows. Catalyzes carboxymethyl transfer from carboxy-S-adenosyl-L-methionine (Cx-SAM) to 5-hydroxyuridine (ho5U) to form 5-carboxymethoxyuridine (cmo5U) at position 34 in tRNAs. This is tRNA U34 carboxymethyltransferase from Glaesserella parasuis serovar 5 (strain SH0165) (Haemophilus parasuis).